The sequence spans 101 residues: Interleukin-8 (101 aa).

The N-terminal stretch at 1–22 (MTSKLAIALLAAFLLSAALCKA) is a signal peptide. Arginine 27 carries the citrulline modification. 2 disulfides stabilise this stretch: cysteine 34-cysteine 61 and cysteine 36-cysteine 77.

Belongs to the intercrine alpha (chemokine CxC) family. Homodimer. Citrullination at Arg-27 prevents proteolysis, and dampens tissue inflammation, it also enhances leukocytosis, possibly through impaired chemokine clearance from the blood circulation.

The protein localises to the secreted. Functionally, chemotactic factor that mediates inflammatory response by attracting neutrophils, basophils, and T-cells to clear pathogens and protect the host from infection. Also plays an important role in neutrophil activation. Released in response to an inflammatory stimulus, exerts its effect by binding to the G-protein-coupled receptors CXCR1 and CXCR2, primarily found in neutrophils, monocytes and endothelial cells. G-protein heterotrimer (alpha, beta, gamma subunits) constitutively binds to CXCR1/CXCR2 receptor and activation by IL8 leads to beta and gamma subunits release from Galpha (GNAI2 in neutrophils) and activation of several downstream signaling pathways including PI3K and MAPK pathways. The sequence is that of Interleukin-8 (CXCL8) from Tursiops truncatus (Atlantic bottle-nosed dolphin).